Here is a 299-residue protein sequence, read N- to C-terminus: Large ribosomal subunit protein eL22 (299 aa).

Disordered stretches follow at residues 1-142 (MAPT…AAPA) and 155-178 (VAKP…KKNV). Composition is skewed to basic and acidic residues over residues 33 to 42 (GKVEKPKAEA) and 55 to 64 (KASEAAKDVK). 2 stretches are compositionally biased toward low complexity: residues 65–98 (AAAA…AAAA) and 105–142 (AAAA…AAPA).

Belongs to the eukaryotic ribosomal protein eL22 family.

The polypeptide is Large ribosomal subunit protein eL22 (RpL22) (Drosophila melanogaster (Fruit fly)).